A 250-amino-acid chain; its full sequence is Small ribosomal subunit protein uS3 (250 aa).

In terms of domain architecture, KH type-2 spans 39 to 107 (VREFLTKNLK…PAQVSINEID (69 aa)). Residues 215 to 250 (MNPAPAEERPAKRGRGRGEGQERRGRRGDRAADKGE) form a disordered region. Positions 220 to 250 (AEERPAKRGRGRGEGQERRGRRGDRAADKGE) are enriched in basic and acidic residues.

This sequence belongs to the universal ribosomal protein uS3 family. As to quaternary structure, part of the 30S ribosomal subunit. Forms a tight complex with proteins S10 and S14.

Binds the lower part of the 30S subunit head. Binds mRNA in the 70S ribosome, positioning it for translation. This is Small ribosomal subunit protein uS3 from Acinetobacter baumannii (strain AB0057).